Here is a 567-residue protein sequence, read N- to C-terminus: Dihydroxy-acid dehydratase (567 aa).

Cys57 contributes to the [2Fe-2S] cluster binding site. Position 89 (Asp89) interacts with Mg(2+). Residue Cys130 participates in [2Fe-2S] cluster binding. Residues Asp131 and Lys132 each coordinate Mg(2+). An N6-carboxylysine modification is found at Lys132. Cys202 serves as a coordination point for [2Fe-2S] cluster. Mg(2+) is bound at residue Glu453. Ser479 serves as the catalytic Proton acceptor.

This sequence belongs to the IlvD/Edd family. Homodimer. Requires [2Fe-2S] cluster as cofactor. Mg(2+) serves as cofactor.

The catalysed reaction is (2R)-2,3-dihydroxy-3-methylbutanoate = 3-methyl-2-oxobutanoate + H2O. It catalyses the reaction (2R,3R)-2,3-dihydroxy-3-methylpentanoate = (S)-3-methyl-2-oxopentanoate + H2O. It functions in the pathway amino-acid biosynthesis; L-isoleucine biosynthesis; L-isoleucine from 2-oxobutanoate: step 3/4. The protein operates within amino-acid biosynthesis; L-valine biosynthesis; L-valine from pyruvate: step 3/4. Functionally, functions in the biosynthesis of branched-chain amino acids. Catalyzes the dehydration of (2R,3R)-2,3-dihydroxy-3-methylpentanoate (2,3-dihydroxy-3-methylvalerate) into 2-oxo-3-methylpentanoate (2-oxo-3-methylvalerate) and of (2R)-2,3-dihydroxy-3-methylbutanoate (2,3-dihydroxyisovalerate) into 2-oxo-3-methylbutanoate (2-oxoisovalerate), the penultimate precursor to L-isoleucine and L-valine, respectively. The polypeptide is Dihydroxy-acid dehydratase (Nocardioides sp. (strain ATCC BAA-499 / JS614)).